Consider the following 229-residue polypeptide: UPF0488 protein C8orf33 (229 aa).

The span at 1–16 (MAALGHLAGEAAAAPG) shows a compositional bias: low complexity. Positions 1-96 (MAALGHLAGE…GEKASEKLAP (96 aa)) are disordered. Alanine 2 is modified (N-acetylalanine). Position 27 is an omega-N-methylarginine (arginine 27). Over residues 69–79 (KKQKNKKKTRN) the composition is skewed to basic residues. Serine 82 is subject to Phosphoserine.

This sequence belongs to the UPF0488 family.

The protein is UPF0488 protein C8orf33 (C8orf33) of Homo sapiens (Human).